Consider the following 469-residue polypeptide: Gamma-aminobutyric acid permease (469 aa).

Residues 1 to 17 lie on the Cytoplasmic side of the membrane; that stretch reads MNQSQSGLKKELKTRHM. The chain crosses the membrane as a helical span at residues 18–38; sequence TMISIAGVIGAGLFVGSGSVI. Histidine 39 is a topological domain (extracellular). The helical transmembrane segment at 40–60 threads the bilayer; the sequence is STGPGAVVSYALAGLLVIFIM. Over 61–94 the chain is Cytoplasmic; it reads RMLGEMSAVNPTSGSFSQYAHDAIGPWAGFTIGW. The chain crosses the membrane as a helical span at residues 95-115; that stretch reads LYWFFWVIVIAIEAIAGAGII. A topological domain (extracellular) is located at residue glutamine 116. A helical transmembrane segment spans residues 117-137; it reads YWFHDIPLWLTSLILTIVLTL. Residues 138-157 are Cytoplasmic-facing; sequence TNVYSVKSFGEFEYWFSLIK. A helical transmembrane segment spans residues 158–178; the sequence is VVTIIAFLIVGFAFIFGFAPG. Topologically, residues 179–200 are extracellular; sequence SEPVGFSNLTGKGGFFPEGISS. The chain crosses the membrane as a helical span at residues 201-221; it reads VLLGIVVVIFSFMGTEIVAIA. Residues 222 to 242 lie on the Cytoplasmic side of the membrane; the sequence is AGETSNPIESVTKATRSVVWR. The chain crosses the membrane as a helical span at residues 243–263; sequence IIVFYVGSIAIVVALLPWNSA. The Extracellular portion of the chain corresponds to 264 to 269; sequence NILESP. Residues 270–290 form a helical membrane-spanning segment; sequence FVAVLEHIGVPAAAQIMNFIV. Over 291–328 the chain is Cytoplasmic; sequence LTAVLSCLNSGLYTTSRMLYSLAERNEAPRRFMKLSKK. A helical membrane pass occupies residues 329 to 349; it reads GVPVQAIVAGTFFSYIAVVMN. The Extracellular segment spans residues 350-355; the sequence is YFSPDT. A helical membrane pass occupies residues 356–376; it reads VFLFLVNSSGAIALLVYLVIA. Residues 377 to 401 lie on the Cytoplasmic side of the membrane; it reads VSQLKMRKKLEKTNPEALKIKMWLF. The chain crosses the membrane as a helical span at residues 402-422; it reads PFLTYLTIIAICGILVSMAFI. The Extracellular portion of the chain corresponds to 423 to 425; the sequence is DSM. The helical transmembrane segment at 426–446 threads the bilayer; the sequence is RDELLLTGVITGIVLISYLVF. The Cytoplasmic segment spans residues 447-469; that stretch reads RKRKVSEKAAANPVTQQQPDILP.

The protein belongs to the amino acid-polyamine-organocation (APC) superfamily. Amino acid transporter (AAT) (TC 2.A.3.1) family.

It localises to the cell membrane. It carries out the reaction 4-aminobutanoate(in) + H(+)(in) = 4-aminobutanoate(out) + H(+)(out). It catalyses the reaction beta-alanine(in) + H(+)(in) = beta-alanine(out) + H(+)(out). Its pathway is amino-acid degradation; 4-aminobutanoate degradation. In terms of biological role, transporter for gamma-aminobutyrate (GABA). Can also transport beta-alanine. Can translocate several open-chain GABA analogs (3-aminobutyrate, 3-aminopropanoate, cis-4-aminobutenoate) across the membrane via counterflow against GABA, but cannot transport muscimol. Also functions as a low-affinity proline importer. In Bacillus subtilis (strain 168), this protein is Gamma-aminobutyric acid permease.